The primary structure comprises 240 residues: Izumo sperm-egg fusion protein 3 (240 aa).

Residues 1–22 (MGDLWLLLLLPLSLAAFHGVKG) form the signal peptide. Residues 23 to 176 (CLECDPKFIE…DDPKKAESRE (154 aa)) lie on the Extracellular side of the membrane. A helical transmembrane segment spans residues 177–197 (IGLFLILLAEGVILGGVLLLF). Over 198–240 (HFCISHQRKMKAIRRSLKTYLEKKLEELMGIKDEKEKDFRGRE) the chain is Cytoplasmic.

This sequence belongs to the Izumo family. In terms of assembly, monomer and homodimer.

It is found in the cell membrane. In Bos taurus (Bovine), this protein is Izumo sperm-egg fusion protein 3 (IZUMO3).